The primary structure comprises 200 residues: GTP cyclohydrolase-2 (200 aa).

A GTP-binding site is contributed by 52–56 (RIHSE). 3 residues coordinate Zn(2+): Cys57, Cys68, and Cys70. GTP contacts are provided by residues Gln73, 94 to 96 (EGR), and Thr116. The active-site Proton acceptor is Asp128. Arg130 serves as the catalytic Nucleophile. 2 residues coordinate GTP: Thr151 and Lys156.

Belongs to the GTP cyclohydrolase II family. It depends on Zn(2+) as a cofactor.

The catalysed reaction is GTP + 4 H2O = 2,5-diamino-6-hydroxy-4-(5-phosphoribosylamino)-pyrimidine + formate + 2 phosphate + 3 H(+). It functions in the pathway cofactor biosynthesis; riboflavin biosynthesis; 5-amino-6-(D-ribitylamino)uracil from GTP: step 1/4. Catalyzes the conversion of GTP to 2,5-diamino-6-ribosylamino-4(3H)-pyrimidinone 5'-phosphate (DARP), formate and pyrophosphate. The protein is GTP cyclohydrolase-2 of Psychromonas ingrahamii (strain DSM 17664 / CCUG 51855 / 37).